The primary structure comprises 273 residues: 2,3,4,5-tetrahydropyridine-2,6-dicarboxylate N-succinyltransferase (273 aa).

This sequence belongs to the transferase hexapeptide repeat family.

The protein localises to the cytoplasm. It carries out the reaction (S)-2,3,4,5-tetrahydrodipicolinate + succinyl-CoA + H2O = (S)-2-succinylamino-6-oxoheptanedioate + CoA. It participates in amino-acid biosynthesis; L-lysine biosynthesis via DAP pathway; LL-2,6-diaminopimelate from (S)-tetrahydrodipicolinate (succinylase route): step 1/3. This is 2,3,4,5-tetrahydropyridine-2,6-dicarboxylate N-succinyltransferase from Acinetobacter baumannii (strain SDF).